The chain runs to 274 residues: tRNA (guanine-N(1)-)-methyltransferase (274 aa).

S-adenosyl-L-methionine contacts are provided by residues glycine 116 and 140–145; that span reads LGDYVL.

This sequence belongs to the RNA methyltransferase TrmD family. As to quaternary structure, homodimer.

The protein localises to the cytoplasm. It carries out the reaction guanosine(37) in tRNA + S-adenosyl-L-methionine = N(1)-methylguanosine(37) in tRNA + S-adenosyl-L-homocysteine + H(+). In terms of biological role, specifically methylates guanosine-37 in various tRNAs. The sequence is that of tRNA (guanine-N(1)-)-methyltransferase from Arthrobacter sp. (strain FB24).